The sequence spans 340 residues: Biotin synthase (340 aa).

Positions 53 to 280 constitute a Radical SAM core domain; that stretch reads SAIQLSSLLS…LARVRLSAGR (228 aa). [4Fe-4S] cluster is bound by residues Cys-68, Cys-72, and Cys-75. [2Fe-2S] cluster is bound by residues Cys-112, Cys-143, Cys-203, and Arg-275.

This sequence belongs to the radical SAM superfamily. Biotin synthase family. Homodimer. It depends on [4Fe-4S] cluster as a cofactor. Requires [2Fe-2S] cluster as cofactor.

The catalysed reaction is (4R,5S)-dethiobiotin + (sulfur carrier)-SH + 2 reduced [2Fe-2S]-[ferredoxin] + 2 S-adenosyl-L-methionine = (sulfur carrier)-H + biotin + 2 5'-deoxyadenosine + 2 L-methionine + 2 oxidized [2Fe-2S]-[ferredoxin]. Its pathway is cofactor biosynthesis; biotin biosynthesis; biotin from 7,8-diaminononanoate: step 2/2. Catalyzes the conversion of dethiobiotin (DTB) to biotin by the insertion of a sulfur atom into dethiobiotin via a radical-based mechanism. The polypeptide is Biotin synthase (Bordetella petrii (strain ATCC BAA-461 / DSM 12804 / CCUG 43448)).